Here is a 527-residue protein sequence, read N- to C-terminus: Tetanolysin (527 aa).

The N-terminal stretch at M1–A32 is a signal peptide. Beta stranded transmembrane passes span Q215–A228, I235–E244, S313–A322, and S330–S342. The Conserved undecapeptide motif lies at E484–R494. The Cholesterol binding signature appears at T516 to L517.

Belongs to the cholesterol-dependent cytolysin family. Homooligomeric pore complex containing 35-50 subunits; when inserted in the host membrane. Purified 48 and 53 kDa proteins with 4 different pIs (6.1, 5.6, 5.3 and 6.6) in decreasing order of activity.

Its subcellular location is the secreted. It is found in the host cell membrane. Cytolysis of host cells is inhibited by cholesterol. A cholesterol-dependent toxin that causes cytolysis by forming pores in cholesterol-containing host membranes. After binding to target membranes, the protein undergoes a major conformation change, leading to its insertion in the host membrane and formation of an oligomeric pore complex. Cholesterol is required for binding to host membranes, membrane insertion and pore formation; cholesterol binding is mediated by a Thr-Leu pair in the C-terminus. The chain is Tetanolysin from Clostridium tetani (strain Massachusetts / E88).